The sequence spans 203 residues: Dephospho-CoA kinase (203 aa).

Residues Ser-3 to Ala-201 enclose the DPCK domain. Gly-11–Thr-16 serves as a coordination point for ATP.

It belongs to the CoaE family.

The protein resides in the cytoplasm. The enzyme catalyses 3'-dephospho-CoA + ATP = ADP + CoA + H(+). It participates in cofactor biosynthesis; coenzyme A biosynthesis; CoA from (R)-pantothenate: step 5/5. Its function is as follows. Catalyzes the phosphorylation of the 3'-hydroxyl group of dephosphocoenzyme A to form coenzyme A. This is Dephospho-CoA kinase from Burkholderia thailandensis (strain ATCC 700388 / DSM 13276 / CCUG 48851 / CIP 106301 / E264).